The following is a 65-amino-acid chain: uncharacterized protein (65 aa).

The next 2 helical transmembrane spans lie at 4-24 (TIWL…MLYP) and 45-65 (FGGG…KTIG).

The protein localises to the cell membrane. This is an uncharacterized protein from Escherichia coli O157:H7.